The sequence spans 98 residues: Gas vesicle protein J2 (98 aa).

Residues Ala75 to Glu98 are disordered. Over residues Asp80–Asp90 the composition is skewed to basic and acidic residues.

Belongs to the gas vesicle GvpA family. In terms of assembly, gvpF to GvpM interact with each other in vitro, and may form multi-subunit complex(es). Interacts with GvpA.

The protein localises to the gas vesicle. Its function is as follows. A minor component of the gas vesicle. Proteins GvpF to GvpM might be involved in nucleating gas vesicle formation. Gas vesicles are hollow, gas filled proteinaceous nanostructures found in several microbial planktonic microorganisms. They allow positioning of halobacteria at the optimal depth for growth in the poorly aerated, shallow brine pools of their habitat. Expression of 2 c-vac DNA fragments containing 2 divergently transcribed regions (gvpE-gvpF-gvpG-gvpH-gvpI-gvpJ-gvpK-gvpL-gvpM and gvpA-gvpC-gvpN-gvpO) allows H.volcanii to produce gas vesicles. The protein is Gas vesicle protein J2 of Halobacterium salinarum (strain ATCC 700922 / JCM 11081 / NRC-1) (Halobacterium halobium).